Reading from the N-terminus, the 426-residue chain is Adenylosuccinate synthetase (426 aa).

GTP is bound by residues 12–18 (GDEGKGK) and 40–42 (GHT). Asp-13 (proton acceptor) is an active-site residue. Mg(2+) is bound by residues Asp-13 and Gly-40. IMP contacts are provided by residues 13–16 (DEGK), 38–41 (NAGH), Thr-131, Arg-145, Gln-226, Thr-241, and Arg-305. The Proton donor role is filled by His-41. 301-307 (ATTGRKR) is a binding site for substrate. Residues Arg-307, 333–335 (KLD), and 415–417 (SVG) each bind GTP.

This sequence belongs to the adenylosuccinate synthetase family. As to quaternary structure, homodimer. It depends on Mg(2+) as a cofactor.

The protein resides in the cytoplasm. It carries out the reaction IMP + L-aspartate + GTP = N(6)-(1,2-dicarboxyethyl)-AMP + GDP + phosphate + 2 H(+). It functions in the pathway purine metabolism; AMP biosynthesis via de novo pathway; AMP from IMP: step 1/2. In terms of biological role, plays an important role in the de novo pathway of purine nucleotide biosynthesis. Catalyzes the first committed step in the biosynthesis of AMP from IMP. The polypeptide is Adenylosuccinate synthetase (Nitratidesulfovibrio vulgaris (strain ATCC 29579 / DSM 644 / CCUG 34227 / NCIMB 8303 / VKM B-1760 / Hildenborough) (Desulfovibrio vulgaris)).